Consider the following 408-residue polypeptide: NADH-quinone oxidoreductase subunit D (408 aa).

It belongs to the complex I 49 kDa subunit family. As to quaternary structure, NDH-1 is composed of 14 different subunits. Subunits NuoB, C, D, E, F, and G constitute the peripheral sector of the complex.

Its subcellular location is the cell inner membrane. The enzyme catalyses a quinone + NADH + 5 H(+)(in) = a quinol + NAD(+) + 4 H(+)(out). Functionally, NDH-1 shuttles electrons from NADH, via FMN and iron-sulfur (Fe-S) centers, to quinones in the respiratory chain. The immediate electron acceptor for the enzyme in this species is believed to be ubiquinone. Couples the redox reaction to proton translocation (for every two electrons transferred, four hydrogen ions are translocated across the cytoplasmic membrane), and thus conserves the redox energy in a proton gradient. The protein is NADH-quinone oxidoreductase subunit D of Campylobacter jejuni subsp. jejuni serotype O:2 (strain ATCC 700819 / NCTC 11168).